A 186-amino-acid polypeptide reads, in one-letter code: Ribosome maturation factor RimM (186 aa).

A PRC barrel domain is found at 93-166 (PDEYYDHQLM…RAVIDPPPGL (74 aa)). Positions 160–186 (IDPPPGLIDDRAEVDSSDTEAATEADA) are disordered. A compositionally biased stretch (acidic residues) spans 174–186 (DSSDTEAATEADA).

The protein belongs to the RimM family. As to quaternary structure, binds ribosomal protein uS19.

Its subcellular location is the cytoplasm. Its function is as follows. An accessory protein needed during the final step in the assembly of 30S ribosomal subunit, possibly for assembly of the head region. Essential for efficient processing of 16S rRNA. May be needed both before and after RbfA during the maturation of 16S rRNA. It has affinity for free ribosomal 30S subunits but not for 70S ribosomes. The chain is Ribosome maturation factor RimM from Streptomyces avermitilis (strain ATCC 31267 / DSM 46492 / JCM 5070 / NBRC 14893 / NCIMB 12804 / NRRL 8165 / MA-4680).